The following is a 147-amino-acid chain: UPF0047 protein sll1880 (147 aa).

It belongs to the UPF0047 family.

The sequence is that of UPF0047 protein sll1880 from Synechocystis sp. (strain ATCC 27184 / PCC 6803 / Kazusa).